We begin with the raw amino-acid sequence, 207 residues long: Guanylate kinase (207 aa).

Residues 4–184 (GTLYIVSAPS…ALSDLKTIIR (181 aa)) form the Guanylate kinase-like domain. ATP is bound at residue 11–18 (APSGAGKS).

Belongs to the guanylate kinase family.

It localises to the cytoplasm. It carries out the reaction GMP + ATP = GDP + ADP. Essential for recycling GMP and indirectly, cGMP. The chain is Guanylate kinase (gmk) from Salmonella typhimurium (strain LT2 / SGSC1412 / ATCC 700720).